A 122-amino-acid chain; its full sequence is Prefoldin subunit 1 (122 aa).

A2 bears the N-acetylalanine mark.

Belongs to the prefoldin subunit beta family. As to quaternary structure, heterohexamer of two PFD-alpha type and four PFD-beta type subunits.

Its function is as follows. Binds specifically to cytosolic chaperonin (c-CPN) and transfers target proteins to it. Binds to nascent polypeptide chain and promotes folding in an environment in which there are many competing pathways for nonnative proteins. This Homo sapiens (Human) protein is Prefoldin subunit 1 (PFDN1).